A 603-amino-acid polypeptide reads, in one-letter code: Isocitrate dehydrogenase kinase/phosphatase (603 aa).

ATP-binding positions include 327–333 and Lys-348; that span reads APGIKGL. The active site involves Asp-383.

It belongs to the AceK family.

Its subcellular location is the cytoplasm. It catalyses the reaction L-seryl-[isocitrate dehydrogenase] + ATP = O-phospho-L-seryl-[isocitrate dehydrogenase] + ADP + H(+). Functionally, bifunctional enzyme which can phosphorylate or dephosphorylate isocitrate dehydrogenase (IDH) on a specific serine residue. This is a regulatory mechanism which enables bacteria to bypass the Krebs cycle via the glyoxylate shunt in response to the source of carbon. When bacteria are grown on glucose, IDH is fully active and unphosphorylated, but when grown on acetate or ethanol, the activity of IDH declines drastically concomitant with its phosphorylation. This chain is Isocitrate dehydrogenase kinase/phosphatase, found in Burkholderia thailandensis (strain ATCC 700388 / DSM 13276 / CCUG 48851 / CIP 106301 / E264).